Reading from the N-terminus, the 342-residue chain is Glycerol-1-phosphate dehydrogenase [NAD(P)+] (342 aa).

NAD(+) contacts are provided by residues glycine 84 to aspartate 88 and threonine 106 to serine 109. Aspartate 111 contributes to the substrate binding site. Residue serine 115 participates in NAD(+) binding. Aspartate 160 lines the substrate pocket. Zn(2+) is bound by residues aspartate 160 and histidine 241. Position 245 (histidine 245) interacts with substrate. A Zn(2+)-binding site is contributed by histidine 260.

The protein belongs to the glycerol-1-phosphate dehydrogenase family. In terms of assembly, homodimer. It depends on Zn(2+) as a cofactor.

Its subcellular location is the cytoplasm. It carries out the reaction sn-glycerol 1-phosphate + NAD(+) = dihydroxyacetone phosphate + NADH + H(+). It catalyses the reaction sn-glycerol 1-phosphate + NADP(+) = dihydroxyacetone phosphate + NADPH + H(+). Its pathway is membrane lipid metabolism; glycerophospholipid metabolism. In terms of biological role, catalyzes the NAD(P)H-dependent reduction of dihydroxyacetonephosphate (DHAP or glycerone phosphate) to glycerol 1-phosphate (G1P). The G1P thus generated is used as the glycerophosphate backbone of phospholipids in the cellular membranes of Archaea. The chain is Glycerol-1-phosphate dehydrogenase [NAD(P)+] from Pyrobaculum islandicum (strain DSM 4184 / JCM 9189 / GEO3).